The sequence spans 599 residues: Elongation factor 4 (599 aa).

The tr-type G domain occupies 4–186 (KFIRNFSIIA…AIIKHVPPPL (183 aa)). GTP contacts are provided by residues 16–21 (DHGKST) and 133–136 (NKID).

It belongs to the TRAFAC class translation factor GTPase superfamily. Classic translation factor GTPase family. LepA subfamily.

The protein localises to the cell membrane. The enzyme catalyses GTP + H2O = GDP + phosphate + H(+). In terms of biological role, required for accurate and efficient protein synthesis under certain stress conditions. May act as a fidelity factor of the translation reaction, by catalyzing a one-codon backward translocation of tRNAs on improperly translocated ribosomes. Back-translocation proceeds from a post-translocation (POST) complex to a pre-translocation (PRE) complex, thus giving elongation factor G a second chance to translocate the tRNAs correctly. Binds to ribosomes in a GTP-dependent manner. The chain is Elongation factor 4 from Ureaplasma urealyticum serovar 10 (strain ATCC 33699 / Western).